The following is a 305-amino-acid chain: Superkiller complex protein 8 (305 aa).

7 WD repeats span residues 14–57 (AHED…LEMQ), 62–101 (GHQL…QIRS), 104–143 (AGPV…KEYS), 146–187 (TRGK…HTLE), 188–227 (GHAM…LAAT), 230–269 (GHGS…CVHT), and 272–305 (DHQD…DCPI).

The protein belongs to the SKI8 family. Component of the PAF1 complex. Component of the SKI complex.

It is found in the nucleus. The protein resides in the cytoplasm. Component of the PAF1 complex (PAF1C) which has multiple functions during transcription by RNA polymerase II and is implicated in regulation of development and maintenance of embryonic stem cell pluripotency. PAF1C associates with RNA polymerase II through interaction with POLR2A CTD non-phosphorylated and 'Ser-2'- and 'Ser-5'-phosphorylated forms and is involved in transcriptional elongation, acting both independently and synergistically with TCEA1 and in cooperation with the DSIF complex and HTATSF1. Also acts as a component of the SKI complex, a multiprotein complex that assists the RNA-degrading exosome during the mRNA decay and quality-control pathways. The SKI complex catalyzes mRNA extraction from 80S ribosomal complexes in the 3'-5' direction and channels mRNA to the cytosolic exosome for degradation. This chain is Superkiller complex protein 8 (skic8), found in Xenopus laevis (African clawed frog).